We begin with the raw amino-acid sequence, 394 residues long: Magnesium transporter MRS2-2 (394 aa).

The interval proline 115–glutamate 145 is disordered. Transmembrane regions (helical) follow at residues leucine 329 to glycine 349 and tyrosine 366 to alanine 386. A Required for magnesium transport activity motif is present at residues glycine 349–asparagine 351.

It belongs to the CorA metal ion transporter (MIT) (TC 1.A.35.5) family. Expressed in the whole plant but preferentially in the mature anthers.

Its subcellular location is the membrane. Low-affinity magnesium transporter that mediates the influx of magnesium. Plays a crucial role in male gametophyte development and male fertility. This chain is Magnesium transporter MRS2-2 (MRS2-2), found in Arabidopsis thaliana (Mouse-ear cress).